The sequence spans 63 residues: Large ribosomal subunit protein eL37 (63 aa).

4 residues coordinate Zn(2+): C20, C23, C35, and C38. The C4-type zinc finger occupies 20-38 (CRRCGHHSFNVRKGYCAHC).

The protein belongs to the eukaryotic ribosomal protein eL37 family. Requires Zn(2+) as cofactor.

Functionally, binds to the 23S rRNA. This chain is Large ribosomal subunit protein eL37, found in Thermofilum pendens (strain DSM 2475 / Hrk 5).